The primary structure comprises 400 residues: Probable transposase for insertion sequence element ISRM3-like (400 aa).

It belongs to the transposase mutator family.

Its function is as follows. Required for the transposition of the insertion element. This is Probable transposase for insertion sequence element ISRM3-like from Sinorhizobium fredii (strain NBRC 101917 / NGR234).